Consider the following 226-residue polypeptide: uncharacterized protein (226 aa).

This is an uncharacterized protein from Bacillus subtilis (strain 168).